The primary structure comprises 634 residues: Carbon monoxide dehydrogenase 2 (634 aa).

Positions 44, 53, 56, 61, and 73 each coordinate [4Fe-4S] cluster. [Ni-4Fe-5S] cluster-binding residues include H264, C343, C453, C484, and C525.

It belongs to the Ni-containing carbon monoxide dehydrogenase family. Homodimer. The cofactor is [4Fe-4S] cluster. Requires [Ni-4Fe-5S] cluster as cofactor.

The enzyme catalyses CO + 2 oxidized [2Fe-2S]-[ferredoxin] + H2O = 2 reduced [2Fe-2S]-[ferredoxin] + CO2 + 2 H(+). In terms of biological role, CODH oxidizes carbon monoxide coupled, via CooF, to the reduction of a hydrogen cation by a hydrogenase (possibly CooH). In Methanosarcina mazei (strain ATCC BAA-159 / DSM 3647 / Goe1 / Go1 / JCM 11833 / OCM 88) (Methanosarcina frisia), this protein is Carbon monoxide dehydrogenase 2 (cooS2).